The chain runs to 143 residues: Large ribosomal subunit protein uL11 (143 aa).

It belongs to the universal ribosomal protein uL11 family. In terms of assembly, part of the ribosomal stalk of the 50S ribosomal subunit. Interacts with L10 and the large rRNA to form the base of the stalk. L10 forms an elongated spine to which L12 dimers bind in a sequential fashion forming a multimeric L10(L12)X complex. One or more lysine residues are methylated.

Functionally, forms part of the ribosomal stalk which helps the ribosome interact with GTP-bound translation factors. The sequence is that of Large ribosomal subunit protein uL11 from Zymomonas mobilis subsp. mobilis (strain ATCC 31821 / ZM4 / CP4).